Here is a 237-residue protein sequence, read N- to C-terminus: Phosphoribosylaminoimidazole-succinocarboxamide synthase (237 aa).

The protein belongs to the SAICAR synthetase family.

It catalyses the reaction 5-amino-1-(5-phospho-D-ribosyl)imidazole-4-carboxylate + L-aspartate + ATP = (2S)-2-[5-amino-1-(5-phospho-beta-D-ribosyl)imidazole-4-carboxamido]succinate + ADP + phosphate + 2 H(+). It functions in the pathway purine metabolism; IMP biosynthesis via de novo pathway; 5-amino-1-(5-phospho-D-ribosyl)imidazole-4-carboxamide from 5-amino-1-(5-phospho-D-ribosyl)imidazole-4-carboxylate: step 1/2. The polypeptide is Phosphoribosylaminoimidazole-succinocarboxamide synthase (Shigella sonnei (strain Ss046)).